The sequence spans 439 residues: Glucan 1,3-beta-glucosidase (439 aa).

The first 18 residues, Met-1 to Thr-18, serve as a signal peptide directing secretion. The Proton donor role is filled by Glu-227. 2 disulfide bridges follow: Cys-311–Cys-437 and Cys-336–Cys-366. Residue Glu-328 is the Nucleophile of the active site.

This sequence belongs to the glycosyl hydrolase 5 (cellulase A) family.

It localises to the secreted. It carries out the reaction Successive hydrolysis of beta-D-glucose units from the non-reducing ends of (1-&gt;3)-beta-D-glucans, releasing alpha-glucose.. In terms of biological role, beta-glucanases participate in the metabolism of beta-glucan, the main structural component of the cell wall. It could also function biosynthetically as a transglycosylase. This is Glucan 1,3-beta-glucosidase (EXG1) from Lachancea kluyveri (strain ATCC 58438 / CBS 3082 / BCRC 21498 / NBRC 1685 / JCM 7257 / NCYC 543 / NRRL Y-12651) (Yeast).